A 195-amino-acid chain; its full sequence is FMN-dependent NADH:quinone oxidoreductase (195 aa).

FMN is bound by residues S9, 15-17 (SVS), 85-88 (MYNF), and 129-132 (SRGG).

It belongs to the azoreductase type 1 family. As to quaternary structure, homodimer. The cofactor is FMN.

The enzyme catalyses 2 a quinone + NADH + H(+) = 2 a 1,4-benzosemiquinone + NAD(+). The catalysed reaction is N,N-dimethyl-1,4-phenylenediamine + anthranilate + 2 NAD(+) = 2-(4-dimethylaminophenyl)diazenylbenzoate + 2 NADH + 2 H(+). In terms of biological role, quinone reductase that provides resistance to thiol-specific stress caused by electrophilic quinones. Its function is as follows. Also exhibits azoreductase activity. Catalyzes the reductive cleavage of the azo bond in aromatic azo compounds to the corresponding amines. This is FMN-dependent NADH:quinone oxidoreductase from Stenotrophomonas maltophilia (strain K279a).